The following is a 226-amino-acid chain: CRISPR-associated protein Cas5 (226 aa).

The protein belongs to the CRISPR-associated protein Cas5 family. Subtype I-A/Apern subfamily. Can form a Cascade complex with Csa5, Cas7, Cas3, Cas3' and Cas8a2.

Its function is as follows. CRISPR (clustered regularly interspaced short palindromic repeat) is an adaptive immune system that provides protection against mobile genetic elements (viruses, transposable elements and conjugative plasmids). CRISPR clusters contain spacers, sequences complementary to antecedent mobile elements, and target invading nucleic acids. CRISPR clusters are transcribed and processed into CRISPR RNA (crRNA). The chain is CRISPR-associated protein Cas5 (cas5a) from Thermoproteus tenax (strain ATCC 35583 / DSM 2078 / JCM 9277 / NBRC 100435 / Kra 1).